Consider the following 197-residue polypeptide: NADH-quinone oxidoreductase subunit C (197 aa).

The protein belongs to the complex I 30 kDa subunit family. As to quaternary structure, NDH-1 is composed of 14 different subunits. Subunits NuoB, C, D, E, F, and G constitute the peripheral sector of the complex.

It is found in the cell inner membrane. The enzyme catalyses a quinone + NADH + 5 H(+)(in) = a quinol + NAD(+) + 4 H(+)(out). Its function is as follows. NDH-1 shuttles electrons from NADH, via FMN and iron-sulfur (Fe-S) centers, to quinones in the respiratory chain. The immediate electron acceptor for the enzyme in this species is believed to be ubiquinone. Couples the redox reaction to proton translocation (for every two electrons transferred, four hydrogen ions are translocated across the cytoplasmic membrane), and thus conserves the redox energy in a proton gradient. The polypeptide is NADH-quinone oxidoreductase subunit C (Rickettsia typhi (strain ATCC VR-144 / Wilmington)).